The chain runs to 383 residues: Omega-6 fatty acid desaturase, endoplasmic reticulum isozyme 2 (383 aa).

Helical transmembrane passes span Thr-61–Leu-81, Gly-85–His-105, and Leu-117–Trp-137. Positions His-105–His-109 match the Histidine box-1 motif. The Histidine box-2 signature appears at His-141 to His-145. Helical transmembrane passes span Val-179 to Ser-199, Ile-225 to Ala-245, and Ala-249 to Ile-269. Positions His-315–His-319 match the Histidine box-3 motif.

Belongs to the fatty acid desaturase type 1 family.

The protein resides in the endoplasmic reticulum membrane. Its pathway is lipid metabolism; polyunsaturated fatty acid biosynthesis. In terms of biological role, ER (microsomal) omega-6 fatty acid desaturase introduces the second double bond in the biosynthesis of 18:3 fatty acids, important constituents of plant membranes. It is thought to use cytochrome b5 as an electron donor and to act on fatty acids esterified to phosphatidylcholine and, possibly, other phospholipids. This is Omega-6 fatty acid desaturase, endoplasmic reticulum isozyme 2 (FAD2-2) from Glycine max (Soybean).